Consider the following 343-residue polypeptide: Glutamine synthetase (343 aa).

The GS beta-grasp domain occupies 3–87 (FKAEYIWIDG…CEVLNIDLTP (85 aa)). A GS catalytic domain is found at 92-343 (TRAALAEVAE…CSALEKAGQV (252 aa)). 4 residues coordinate Mg(2+): glutamate 113, glutamate 115, glutamate 174, and glutamate 181. Glutamate 279 provides a ligand contact to L-glutamate.

It belongs to the glutamine synthetase family. In terms of assembly, homooctamer and homotetramer. The cofactor is Mg(2+).

Its subcellular location is the cytoplasm. The enzyme catalyses L-glutamate + NH4(+) + ATP = L-glutamine + ADP + phosphate + H(+). In terms of biological role, catalyzes the ATP-dependent biosynthesis of glutamine from glutamate and ammonia. The chain is Glutamine synthetase from Streptomyces viridochromogenes.